Reading from the N-terminus, the 155-residue chain is Prespore-specific protein E (155 aa).

The N-terminal stretch at 1–20 (MRFISIFLIIVALCVSSSWA) is a signal peptide. 4 N-linked (GlcNAc...) asparagine glycosylation sites follow: Asn22, Asn82, Asn85, and Asn102. Residue Ser105 is glycosylated (O-linked (GlcNAc) serine). The GPI-like-anchor amidated asparagine moiety is linked to residue Asn133. Residues 134–155 (SADKVAVGIAIIFGALISLLAL) constitute a propeptide, removed in mature form.

The GPI-like-anchor contains a phosphoceramide group, rather than a phosphatidyl group.

The protein localises to the cell membrane. The polypeptide is Prespore-specific protein E (pspE) (Dictyostelium discoideum (Social amoeba)).